A 437-amino-acid polypeptide reads, in one-letter code: Phosphoethanolamine N-methyltransferase 2 (437 aa).

N-methylethanolamine phosphate contacts are provided by residues 186–187 and tyrosine 195; that span reads QY. S-adenosyl-L-homocysteine contacts are provided by residues 204–205, glycine 232, aspartate 254, 281–282, and arginine 298; these read IS and DA. Residues tyrosine 329, tyrosine 343, 347 to 349, and lysine 415 each bind N-methylethanolamine phosphate; that span reads RAY.

It belongs to the class I-like SAM-binding methyltransferase superfamily.

The catalysed reaction is N-methylethanolamine phosphate + S-adenosyl-L-methionine = N,N-dimethylethanolamine phosphate + S-adenosyl-L-homocysteine + H(+). It catalyses the reaction N,N-dimethylethanolamine phosphate + S-adenosyl-L-methionine = phosphocholine + S-adenosyl-L-homocysteine + H(+). Its pathway is phospholipid metabolism; phosphatidylcholine biosynthesis; phosphocholine from phosphoethanolamine. Its activity is regulated as follows. Feedback inhibition by phosphatidylcholine and also by S-adenosylhomocysteine. Functionally, catalyzes the last two methylation reactions in the synthesis of phosphocholine, by converting phospho-monomethylethanolamine (N-methylethanolamine phosphate) into phospho-dimethylethanolamine (N,N-dimethylethanolamine phosphate) and the latter into phosphocholine. Phosphocholine is a precursor for phosphatidylcholine, a major component in membranes and a precursor itself in the production of glycoconjugates secreted by parasitic nematodes to avoid host immune responses. The protein is Phosphoethanolamine N-methyltransferase 2 of Caenorhabditis elegans.